Reading from the N-terminus, the 389-residue chain is Probable dual-specificity RNA methyltransferase RlmN (389 aa).

E114 (proton acceptor) is an active-site residue. The Radical SAM core domain occupies 120-358 (QHYGLSVCVT…CVVRQEHGTD (239 aa)). C127 and C363 form a disulfide bridge. Positions 134, 138, and 141 each coordinate [4Fe-4S] cluster. S-adenosyl-L-methionine contacts are provided by residues 186–187 (GE), S218, 241–243 (SLH), and N319. The S-methylcysteine intermediate role is filled by C363. The segment at 370–389 (TMKRDRQKAVAEASGKSEGK) is disordered. Basic and acidic residues predominate over residues 371-389 (MKRDRQKAVAEASGKSEGK).

This sequence belongs to the radical SAM superfamily. RlmN family. [4Fe-4S] cluster serves as cofactor.

It localises to the cytoplasm. The enzyme catalyses adenosine(2503) in 23S rRNA + 2 reduced [2Fe-2S]-[ferredoxin] + 2 S-adenosyl-L-methionine = 2-methyladenosine(2503) in 23S rRNA + 5'-deoxyadenosine + L-methionine + 2 oxidized [2Fe-2S]-[ferredoxin] + S-adenosyl-L-homocysteine. It carries out the reaction adenosine(37) in tRNA + 2 reduced [2Fe-2S]-[ferredoxin] + 2 S-adenosyl-L-methionine = 2-methyladenosine(37) in tRNA + 5'-deoxyadenosine + L-methionine + 2 oxidized [2Fe-2S]-[ferredoxin] + S-adenosyl-L-homocysteine. Functionally, specifically methylates position 2 of adenine 2503 in 23S rRNA and position 2 of adenine 37 in tRNAs. The sequence is that of Probable dual-specificity RNA methyltransferase RlmN from Streptococcus thermophilus (strain ATCC BAA-250 / LMG 18311).